Consider the following 318-residue polypeptide: DNA polymerase IV (318 aa).

The UmuC domain maps to 6 to 186 (IIHIDMDAFY…LPLGKIPGVG (181 aa)). Mg(2+)-binding residues include aspartate 10 and aspartate 104. The active site involves glutamate 105.

This sequence belongs to the DNA polymerase type-Y family. As to quaternary structure, monomer. Mg(2+) is required as a cofactor.

The protein resides in the cytoplasm. It catalyses the reaction DNA(n) + a 2'-deoxyribonucleoside 5'-triphosphate = DNA(n+1) + diphosphate. Its function is as follows. Poorly processive, error-prone DNA polymerase involved in untargeted mutagenesis. Copies undamaged DNA at stalled replication forks, which arise in vivo from mismatched or misaligned primer ends. These misaligned primers can be extended by PolIV. Exhibits no 3'-5' exonuclease (proofreading) activity. May be involved in translesional synthesis, in conjunction with the beta clamp from PolIII. The protein is DNA polymerase IV of Neisseria meningitidis serogroup B (strain ATCC BAA-335 / MC58).